A 457-amino-acid polypeptide reads, in one-letter code: Antizyme inhibitor 2 (457 aa).

The necessary for polyamine uptake stimulation stretch occupies residues 115–138 (QVAQIKYAAKHGVRLLSFDNEVEL).

It belongs to the Orn/Lys/Arg decarboxylase class-II family. ODC antizyme inhibitor subfamily. Monomer. Interacts with OAZ1, OAZ2 and OAZ3; this interaction disrupts the interaction between the antizyme and ODC1. Does not form a heterodimer with ODC1. Ubiquitinated, leading to its proteasomal degradation; a process that is reduced in presence of antizymes. May also be degraded through the lysosomal degradative pathway in a proteasomal-independent manner.

It is found in the nucleus. The protein localises to the cytoplasm. Its subcellular location is the perinuclear region. The protein resides in the membrane. It localises to the cytoplasmic vesicle. It is found in the endoplasmic reticulum-Golgi intermediate compartment. The protein localises to the golgi apparatus. Its subcellular location is the cis-Golgi network. The protein resides in the trans-Golgi network. It localises to the cytoplasmic granule. It is found in the cell projection. The protein localises to the axon. Its subcellular location is the dendrite. The protein resides in the perikaryon. Antizyme inhibitor (AZI) protein that positively regulates ornithine decarboxylase (ODC) activity and polyamine uptake. AZI is an enzymatically inactive ODC homolog that counteracts the negative effect of ODC antizymes (AZs) OAZ1, OAZ2 and OAZ3 on ODC activity by competing with ODC for antizyme-binding. Inhibits antizyme-dependent ODC degradation and releases ODC monomers from their inactive complex with antizymes, leading to formation of the catalytically active ODC homodimer and restoring polyamine production. Participates in the morphological integrity of the trans-Golgi network (TGN) and functions as a regulator of intracellular secretory vesicle trafficking. The protein is Antizyme inhibitor 2 (Azin2) of Rattus norvegicus (Rat).